Here is a 120-residue protein sequence, read N- to C-terminus: Glycine cleavage system H protein (120 aa).

The Lipoyl-binding domain occupies 17-99 (VATVGITAHA…QGGGWLYRLK (83 aa)). An N6-lipoyllysine modification is found at Lys58.

Belongs to the GcvH family. In terms of assembly, the glycine cleavage system is composed of four proteins: P, T, L and H. It depends on (R)-lipoate as a cofactor.

Its function is as follows. The glycine cleavage system catalyzes the degradation of glycine. The H protein shuttles the methylamine group of glycine from the P protein to the T protein. The protein is Glycine cleavage system H protein of Methylorubrum extorquens (strain CM4 / NCIMB 13688) (Methylobacterium extorquens).